The sequence spans 492 residues: Ketol-acid reductoisomerase (NADP(+)) (492 aa).

The KARI N-terminal Rossmann domain maps to 14–208; it reads LDQLGKCRFM…GGHRAGVLQS (195 aa). Residues 45 to 48, R68, R76, S78, and 108 to 110 contribute to the NADP(+) site; these read CGAQ and DKQ. The active site involves H132. NADP(+) is bound at residue G158. KARI C-terminal knotted domains lie at 209–344 and 345–485; these read SFVA…NAPQ and FDGK…MKDM. Mg(2+) contacts are provided by D217, E221, E389, and E393. S414 lines the substrate pocket.

The protein belongs to the ketol-acid reductoisomerase family. It depends on Mg(2+) as a cofactor.

It catalyses the reaction (2R)-2,3-dihydroxy-3-methylbutanoate + NADP(+) = (2S)-2-acetolactate + NADPH + H(+). The catalysed reaction is (2R,3R)-2,3-dihydroxy-3-methylpentanoate + NADP(+) = (S)-2-ethyl-2-hydroxy-3-oxobutanoate + NADPH + H(+). Its pathway is amino-acid biosynthesis; L-isoleucine biosynthesis; L-isoleucine from 2-oxobutanoate: step 2/4. It participates in amino-acid biosynthesis; L-valine biosynthesis; L-valine from pyruvate: step 2/4. In terms of biological role, involved in the biosynthesis of branched-chain amino acids (BCAA). Catalyzes an alkyl-migration followed by a ketol-acid reduction of (S)-2-acetolactate (S2AL) to yield (R)-2,3-dihydroxy-isovalerate. In the isomerase reaction, S2AL is rearranged via a Mg-dependent methyl migration to produce 3-hydroxy-3-methyl-2-ketobutyrate (HMKB). In the reductase reaction, this 2-ketoacid undergoes a metal-dependent reduction by NADPH to yield (R)-2,3-dihydroxy-isovalerate. The polypeptide is Ketol-acid reductoisomerase (NADP(+)) (Pectobacterium carotovorum subsp. carotovorum (strain PC1)).